Consider the following 598-residue polypeptide: Nuclear receptor subfamily 4 group A member 2 (598 aa).

Residues 1-22 form a disordered region; the sequence is MPCVQAQYGSSPQGASPASQSY. A compositionally biased stretch (low complexity) spans 8-22; it reads YGSSPQGASPASQSY. Positions 260–335 form a DNA-binding region, nuclear receptor; it reads EGLCAVCGDN…VGMVKEVVRT (76 aa). NR C4-type zinc fingers lie at residues 263-283 and 299-318; these read CAVC…CEGC and CLAN…CQYC. Positions 287–314 match the Bipartite nuclear localization signal (NLS1) motif; that stretch reads FKRTVQKNAKYVCLANKNCPVDKRRRNR. Residues 337 to 361 form a disordered region; sequence SLKGRRGRLPSKPKSPQEPSPPSPP. The Nuclear localization signal (NLS1) signature appears at 338-350; sequence LKGRRGRLPSKPK. Positions 352 to 361 are enriched in pro residues; that stretch reads PQEPSPPSPP. The NR LBD domain occupies 360 to 595; it reads PPVSLISALV…AIIDKLFLDT (236 aa). Residues 443 to 452 carry the nuclear export sequence (NES1) motif; sequence FLELFVLRLA. A nuclear export sequence (NES2) motif is present at residues 568–577; sequence QGLQRIFYLK.

It belongs to the nuclear hormone receptor family. NR4 subfamily. Interacts with SFPQ, NCOR2, SIN3A and HADC1. The interaction with NCOR2 increases in the absence of PITX3. Interacts with PER2.

It is found in the cytoplasm. The protein localises to the nucleus. In terms of biological role, transcriptional regulator which is important for the differentiation and maintenance of meso-diencephalic dopaminergic (mdDA) neurons during development. It is crucial for expression of a set of genes such as SLC6A3, SLC18A2, TH and DRD2 which are essential for development of mdDA neurons. This Bos taurus (Bovine) protein is Nuclear receptor subfamily 4 group A member 2 (NR4A2).